The following is a 516-amino-acid chain: Monocarboxylate transporter 12 (516 aa).

Residues 1-50 (MPSGSHWTANSSKIITWLLEQPGKEEKRKTMAKVNRARSTSPPDGGWGWM) are Cytoplasmic-facing. Helical transmembrane passes span 51–73 (IVAG…SIFF), 88–108 (AWIH…GSVV), 116–136 (VGIM…SFAT), 145–165 (LGVL…AMVG), 178–198 (IAMS…QLLI), 207–227 (LLIL…MRPI), 283–303 (FVVL…LFVY), 319–339 (AFLM…FGWL), 350–370 (YVCY…LPML), 377–397 (VPFS…IPVV), 410–430 (ALGV…PIAG), and 440–460 (TAAF…LGFA). At 461–516 (RLIKRMRKTQLQFIAKESDPKLQLWTNGSVAYSVARELDQKHGEPVATAVPGYSLT) the chain is on the cytoplasmic side.

It belongs to the major facilitator superfamily. Monocarboxylate porter (TC 2.A.1.13) family. Interacts with isoform 2 of BSG; this interaction is required for its localization to the plasma membrane. In terms of tissue distribution, most highly expressed in kidney, followed by retina, lung, heart and testis. Very weakly expressed in brain and liver. Also detected in lens.

It is found in the cell membrane. It localises to the basolateral cell membrane. The catalysed reaction is creatine(in) = creatine(out). The enzyme catalyses guanidinoacetate(in) = guanidinoacetate(out). With respect to regulation, creatine uptake is inhibited by carbonyl cyanide 3-chlorophenylhydrazone (CCCP) and by valinomycin. Functionally, functions as a transporter for creatine and as well for its precursor guanidinoacetate. Transport of creatine and GAA is independent of resting membrane potential and extracellular Na(+), Cl(-), or pH. Contributes to the process of creatine biosynthesis and distribution. This chain is Monocarboxylate transporter 12, found in Homo sapiens (Human).